Here is a 102-residue protein sequence, read N- to C-terminus: Large ribosomal subunit protein bL21 (102 aa).

The protein belongs to the bacterial ribosomal protein bL21 family. In terms of assembly, part of the 50S ribosomal subunit. Contacts protein L20.

Functionally, this protein binds to 23S rRNA in the presence of protein L20. The sequence is that of Large ribosomal subunit protein bL21 from Cytophaga hutchinsonii (strain ATCC 33406 / DSM 1761 / CIP 103989 / NBRC 15051 / NCIMB 9469 / D465).